The following is a 251-amino-acid chain: Imidazole glycerol phosphate synthase subunit HisF (251 aa).

Active-site residues include Asp12 and Asp131.

The protein belongs to the HisA/HisF family. Heterodimer of HisH and HisF.

The protein localises to the cytoplasm. The catalysed reaction is 5-[(5-phospho-1-deoxy-D-ribulos-1-ylimino)methylamino]-1-(5-phospho-beta-D-ribosyl)imidazole-4-carboxamide + L-glutamine = D-erythro-1-(imidazol-4-yl)glycerol 3-phosphate + 5-amino-1-(5-phospho-beta-D-ribosyl)imidazole-4-carboxamide + L-glutamate + H(+). It functions in the pathway amino-acid biosynthesis; L-histidine biosynthesis; L-histidine from 5-phospho-alpha-D-ribose 1-diphosphate: step 5/9. Its function is as follows. IGPS catalyzes the conversion of PRFAR and glutamine to IGP, AICAR and glutamate. The HisF subunit catalyzes the cyclization activity that produces IGP and AICAR from PRFAR using the ammonia provided by the HisH subunit. This chain is Imidazole glycerol phosphate synthase subunit HisF, found in Helicobacter hepaticus (strain ATCC 51449 / 3B1).